Consider the following 149-residue polypeptide: Nucleoside diphosphate kinase (149 aa).

6 residues coordinate ATP: lysine 9, phenylalanine 57, arginine 85, threonine 91, arginine 102, and asparagine 112. Histidine 115 serves as the catalytic Pros-phosphohistidine intermediate.

The protein belongs to the NDK family. Homotetramer. It depends on Mg(2+) as a cofactor.

The protein localises to the cytoplasm. It catalyses the reaction a 2'-deoxyribonucleoside 5'-diphosphate + ATP = a 2'-deoxyribonucleoside 5'-triphosphate + ADP. The catalysed reaction is a ribonucleoside 5'-diphosphate + ATP = a ribonucleoside 5'-triphosphate + ADP. In terms of biological role, major role in the synthesis of nucleoside triphosphates other than ATP. The ATP gamma phosphate is transferred to the NDP beta phosphate via a ping-pong mechanism, using a phosphorylated active-site intermediate. In Carboxydothermus hydrogenoformans (strain ATCC BAA-161 / DSM 6008 / Z-2901), this protein is Nucleoside diphosphate kinase.